Consider the following 246-residue polypeptide: Phycocyanobilin:ferredoxin oxidoreductase (246 aa).

The protein belongs to the HY2 family.

It carries out the reaction (2R,3Z)-phycocyanobilin + 4 oxidized [2Fe-2S]-[ferredoxin] = biliverdin IXalpha + 4 reduced [2Fe-2S]-[ferredoxin] + 4 H(+). Catalyzes the four-electron reduction of biliverdin IX-alpha (2-electron reduction at both the A and D rings); the reaction proceeds via an isolatable 2-electron intermediate, 181,182-dihydrobiliverdin. The sequence is that of Phycocyanobilin:ferredoxin oxidoreductase from Crocosphaera subtropica (strain ATCC 51142 / BH68) (Cyanothece sp. (strain ATCC 51142)).